Reading from the N-terminus, the 309-residue chain is tRNA dimethylallyltransferase (309 aa).

ATP is bound at residue G10–T17. Residue T12–T17 coordinates substrate. The interaction with substrate tRNA stretch occupies residues D35–Q38.

Belongs to the IPP transferase family. Monomer. Requires Mg(2+) as cofactor.

The catalysed reaction is adenosine(37) in tRNA + dimethylallyl diphosphate = N(6)-dimethylallyladenosine(37) in tRNA + diphosphate. Catalyzes the transfer of a dimethylallyl group onto the adenine at position 37 in tRNAs that read codons beginning with uridine, leading to the formation of N6-(dimethylallyl)adenosine (i(6)A). The sequence is that of tRNA dimethylallyltransferase from Clostridium beijerinckii (strain ATCC 51743 / NCIMB 8052) (Clostridium acetobutylicum).